We begin with the raw amino-acid sequence, 239 residues long: MLIEDDTGFVLHARAYRETSLLVEVLSAQHGRIGVLARGVSTAKGQVLRAALQPLQWIRFSALQRGELAQLRGAEALDAAPRLVGQAMLAGFYLSELTLRLAPRQDPLPELYLAYGEARARLGVGAGLAWTLRRFERELLTSLGLGFELDSASDGQPIDPAARYELDPQEGAQRLLSERAGERRAAATGSALLALAADEEPDAADLASLRLPMRRVLAHHLGPRGLKSWEMLEQLAPKR.

This sequence belongs to the RecO family.

In terms of biological role, involved in DNA repair and RecF pathway recombination. The polypeptide is DNA repair protein RecO (Stenotrophomonas maltophilia (strain R551-3)).